Consider the following 306-residue polypeptide: tRNA dimethylallyltransferase 2 (306 aa).

ATP is bound at residue Gly-11–Thr-18. Thr-13–Thr-18 is a substrate binding site. The interaction with substrate tRNA stretch occupies residues Asp-36–Gln-39.

The protein belongs to the IPP transferase family. Monomer. It depends on Mg(2+) as a cofactor.

The enzyme catalyses adenosine(37) in tRNA + dimethylallyl diphosphate = N(6)-dimethylallyladenosine(37) in tRNA + diphosphate. In terms of biological role, catalyzes the transfer of a dimethylallyl group onto the adenine at position 37 in tRNAs that read codons beginning with uridine, leading to the formation of N6-(dimethylallyl)adenosine (i(6)A). The sequence is that of tRNA dimethylallyltransferase 2 from Bacteroides fragilis (strain ATCC 25285 / DSM 2151 / CCUG 4856 / JCM 11019 / LMG 10263 / NCTC 9343 / Onslow / VPI 2553 / EN-2).